A 648-amino-acid chain; its full sequence is Proton myo-inositol cotransporter (648 aa).

At 1–76 (MSRKASENVE…AARRQFQQDE (76 aa)) the chain is on the cytoplasmic side. Phosphoserine occurs at positions 6, 47, and 50. Residues 77–97 (TPAFVYVVAVFSALGGFLFGY) traverse the membrane as a helical segment. At 98-125 (DTGVVSGAMLLLKRQLSLDALWQELLVS) the chain is on the extracellular side. A helical transmembrane segment spans residues 126-146 (STVGAAAVSALAGGALNGVFG). Residues 147-148 (RR) lie on the Cytoplasmic side of the membrane. A helical membrane pass occupies residues 149 to 169 (AAILLASALFTAGSAVLAAAN). Topologically, residues 170 to 178 (NKETLLAGR) are extracellular. Residues 179–199 (LVVGLGIGIASMTVPVYIAEV) traverse the membrane as a helical segment. Over 200-212 (SPPNLRGRLVTIN) the chain is Cytoplasmic. The chain crosses the membrane as a helical span at residues 213 to 233 (TLFITGGQFFASVVDGAFSYL). The Extracellular portion of the chain corresponds to 234–239 (QKDGWR). The helical transmembrane segment at 240–260 (YMLGLAAVPAVIQFFGFLFLP) threads the bilayer. Residues 261-324 (ESPRWLIQKG…RMLSYPPTRR (64 aa)) are Cytoplasmic-facing. The chain crosses the membrane as a helical span at residues 325-345 (ALIVGCGLQMFQQLSGINTIM). Over 346-363 (YYSATILQMSGVEDDRLA) the chain is Extracellular. Residues 364–384 (IWLASVTAFTNFIFTLVGVWL) traverse the membrane as a helical segment. At 385 to 393 (VEKVGRRKL) the chain is on the cytoplasmic side. Residues 394 to 414 (TFGSLAGTTVALIILALGFVL) traverse the membrane as a helical segment. Over 415 to 508 (SAQVSPRITF…NFCPTPYSWT (94 aa)) the chain is Extracellular. Asparagine 433, asparagine 458, and asparagine 485 each carry an N-linked (GlcNAc...) asparagine glycan. The chain crosses the membrane as a helical span at residues 509 to 529 (ALLGLILYLVFFAPGMGPMPW). Topologically, residues 530 to 549 (TVNSEIYPLWARSTGNACSS) are cytoplasmic. A helical membrane pass occupies residues 550 to 570 (GINWIFNVLVSLTFLHTAEYL). The Extracellular portion of the chain corresponds to 571–573 (TYY). Residues 574–594 (GAFFLYAGFAAVGLLFIYGCL) traverse the membrane as a helical segment. Residues 595–648 (PETKGKKLEEIESLFDNRLCTCGTSDSDEGRYIEYIRVKGSNYHLSDNDASDVE) lie on the Cytoplasmic side of the membrane. Residues serine 640 and serine 645 each carry the phosphoserine modification.

Belongs to the major facilitator superfamily. Sugar transporter (TC 2.A.1.1) family. Post-translationally, glycosylated. As to expression, predominantly expressed in the brain.

Its subcellular location is the cell membrane. It carries out the reaction myo-inositol(out) + H(+)(out) = myo-inositol(in) + H(+)(in). Functionally, h(+)-myo-inositol cotransporter. Can also transport related stereoisomers. The protein is Proton myo-inositol cotransporter of Homo sapiens (Human).